A 313-amino-acid polypeptide reads, in one-letter code: tRNA dimethylallyltransferase (313 aa).

11 to 18 contacts ATP; sequence GPTACGKT. 13 to 18 is a substrate binding site; it reads TACGKT. Interaction with substrate tRNA regions lie at residues 36-39, 160-164, and 243-248; these read DSAL, QRIGR, and RCVGYR.

Belongs to the IPP transferase family. As to quaternary structure, monomer. Mg(2+) serves as cofactor.

The enzyme catalyses adenosine(37) in tRNA + dimethylallyl diphosphate = N(6)-dimethylallyladenosine(37) in tRNA + diphosphate. Catalyzes the transfer of a dimethylallyl group onto the adenine at position 37 in tRNAs that read codons beginning with uridine, leading to the formation of N6-(dimethylallyl)adenosine (i(6)A). The sequence is that of tRNA dimethylallyltransferase from Neisseria gonorrhoeae (strain NCCP11945).